We begin with the raw amino-acid sequence, 133 residues long: ATP synthase epsilon chain, chloroplastic (133 aa).

Belongs to the ATPase epsilon chain family. As to quaternary structure, F-type ATPases have 2 components, CF(1) - the catalytic core - and CF(0) - the membrane proton channel. CF(1) has five subunits: alpha(3), beta(3), gamma(1), delta(1), epsilon(1). CF(0) has three main subunits: a, b and c.

The protein resides in the plastid. It localises to the chloroplast thylakoid membrane. Its function is as follows. Produces ATP from ADP in the presence of a proton gradient across the membrane. This chain is ATP synthase epsilon chain, chloroplastic, found in Lotus japonicus (Lotus corniculatus var. japonicus).